Reading from the N-terminus, the 485-residue chain is MDATRKPLRIPPAMAVYAEEHGVFDIIQKMVEKVLVDRPEDPIQYMIDHLSNDNDDVPRVFILGPPASGKHTMAKLLCKRLNATHLTPENVLSSDVSLLVKEAQSYRDKGQEVPDELWAKLMRERLSQVDCIKRGWVLEGFPKTRDQALMLQMAGVCPGHLVVLDAPDIVLIERNMGKRIDITDGEVYHTTFDWPSDPAVQRNLVEPEGISEEETGQRLLEFHRNIPGLLRTYSKVSKKINVDQPYMDVFSQVLTFVLSKQRSLAPHTPRILLYGPPGSGRSLQASLLAQKYGIINICCGQVLKEAVADQTKLGELIQPYIENDQQVPDNFVLKILTDHLSSLESAKHGWVLHGFPQDTDQAALLKDAGFMPNRVFSLDLSDDVVIERLSLCMTDPVSGERYHSIYKPAPRSEVQERLQQNPKYSEEKVQARLDVYHANADELEEFYQDVIHINADQDPYTVFEFIESYIVSPLPKSLPEEPTSP.

Adenylate kinase regions lie at residues 58 to 258 (PRVF…TFVL) and 269 to 471 (PRIL…SYIV). 67–72 (ASGKHT) lines the ATP pocket. An NMP 1 region spans residues 87–113 (TPENVLSSDVSLLVKEAQSYRDKGQEV). Residues 140–143 (GFPK) and Gln147 each bind AMP. The tract at residues 177–206 (GKRIDITDGEVYHTTFDWPSDPAVQRNLVE) is LID 1. Position 218 (Arg218) interacts with AMP. 278-283 (GSGRSL) contacts ATP. Residues 298 to 327 (CCGQVLKEAVADQTKLGELIQPYIENDQQV) form an NMP 2 region. AMP-binding positions include 325-327 (QQV), 354-357 (GFPQ), and Gln361. Residues 391–424 (LCMTDPVSGERYHSIYKPAPRSEVQERLQQNPKY) are LID 2. Arg432 contributes to the AMP binding site.

The protein belongs to the adenylate kinase family.

It localises to the cytoplasm. The protein resides in the cytosol. It carries out the reaction AMP + ATP = 2 ADP. The catalysed reaction is a 2'-deoxyribonucleoside 5'-diphosphate + ATP = a 2'-deoxyribonucleoside 5'-triphosphate + ADP. It catalyses the reaction a ribonucleoside 5'-diphosphate + ATP = a ribonucleoside 5'-triphosphate + ADP. Nucleoside monophosphate (NMP) kinase that catalyzes the reversible transfer of the terminal phosphate group between nucleoside triphosphates and monophosphates. Has highest activity toward AMP, and weaker activity toward dAMP, CMP and dCMP. Also displays broad nucleoside diphosphate kinase activity. The polypeptide is Adenylate kinase 8 (ak8) (Xenopus laevis (African clawed frog)).